The following is a 368-amino-acid chain: Ankyrin repeat domain-containing protein 40 (368 aa).

At Met1 the chain carries N-acetylmethionine. ANK repeat units follow at residues 9 to 38 (EQQERLREAAALGDIREVQKLVESGVDVNS) and 43 to 72 (NGWTCLHWACKRNHGQVVSYLLKSGADKEI). Disordered stretches follow at residues 93-115 (MGVEEEDDDDDDDDNLPQLKKES), 139-176 (DSAQMQNGGPSTPPASPPADGSPPLLPPGEPPLLGTFP), and 196-238 (ILRT…NGTY). A compositionally biased stretch (acidic residues) spans 95–107 (VEEEDDDDDDDDN). The span at 149 to 169 (STPPASPPADGSPPLLPPGEP) shows a compositional bias: pro residues. A compositionally biased stretch (polar residues) spans 212–224 (PVSQSRSLFSSVP).

In Homo sapiens (Human), this protein is Ankyrin repeat domain-containing protein 40 (ANKRD40).